We begin with the raw amino-acid sequence, 303 residues long: MKVIFMGTPEFAVPALKKLITHHEVKAVFTQQPKAKGRGLNLAKSPIHQLAFEHQIPVYTPSTLRNDEIINLINKVNADIIVVIAYGFIVPKAILEAKKYGCLNIHPSDLPRHRGAAPLQRTIIEGDRKSSVCIMRMDTGLDTGDILMKEDFDLEERITLEELHNKCANLGAELLIKTLANIDNIVPITQPSDGVTYAHKLTKAEGKINWHESAYKIDCKIRGMNPWPGVYFSYNDKIIKILEAEYLNADHHFTSGTVISDKLEIACGSGILRVKKLQQESKKALSIEEFLRGTNILKDTVLK.

Position 108–111 (108–111 (SDLP)) interacts with (6S)-5,6,7,8-tetrahydrofolate.

The protein belongs to the Fmt family.

The catalysed reaction is L-methionyl-tRNA(fMet) + (6R)-10-formyltetrahydrofolate = N-formyl-L-methionyl-tRNA(fMet) + (6S)-5,6,7,8-tetrahydrofolate + H(+). Attaches a formyl group to the free amino group of methionyl-tRNA(fMet). The formyl group appears to play a dual role in the initiator identity of N-formylmethionyl-tRNA by promoting its recognition by IF2 and preventing the misappropriation of this tRNA by the elongation apparatus. This Rickettsia rickettsii (strain Iowa) protein is Methionyl-tRNA formyltransferase.